The primary structure comprises 201 residues: Peroxiredoxin 2 (201 aa).

Residues Val-3 to Ala-156 enclose the Thioredoxin domain. Catalysis depends on Cys-44, which acts as the Cysteine sulfenic acid (-SOH) intermediate. Residue Arg-119 participates in substrate binding.

Belongs to the peroxiredoxin family. Prx6 subfamily. As to quaternary structure, homodecamer. Pentamer of dimers that assemble into a ring structure.

It localises to the cytoplasm. The enzyme catalyses a hydroperoxide + [thioredoxin]-dithiol = an alcohol + [thioredoxin]-disulfide + H2O. Thiol-specific peroxidase that catalyzes the reduction of hydrogen peroxide and organic hydroperoxides to water and alcohols, respectively. Plays a role in cell protection against oxidative stress by detoxifying peroxides. This is Peroxiredoxin 2 from Picrophilus torridus (strain ATCC 700027 / DSM 9790 / JCM 10055 / NBRC 100828 / KAW 2/3).